The chain runs to 320 residues: Malate dehydrogenase (320 aa).

NAD(+) contacts are provided by residues 10-15 (GSGMIG) and aspartate 34. Substrate contacts are provided by arginine 83 and arginine 89. Residues asparagine 96 and 119 to 121 (ITN) each bind NAD(+). Substrate is bound by residues asparagine 121 and arginine 152. The active-site Proton acceptor is the histidine 176.

This sequence belongs to the LDH/MDH superfamily. MDH type 3 family.

The catalysed reaction is (S)-malate + NAD(+) = oxaloacetate + NADH + H(+). Functionally, catalyzes the reversible oxidation of malate to oxaloacetate. In Rhizobium etli (strain CIAT 652), this protein is Malate dehydrogenase.